Here is a 381-residue protein sequence, read N- to C-terminus: Cytochrome b (381 aa).

4 helical membrane passes run 33–53 (FGSLLGMCLIIQILTGLFLAM), 77–98 (WLLRNLHANGASMFFMCLFLHV), 113–133 (WNIGVILLLTVMATAFVGYVL), and 178–198 (FFAFHFILPFIIMALAVVHLL). Residues histidine 83 and histidine 97 each contribute to the heme b site. Residues histidine 182 and histidine 196 each coordinate heme b. Histidine 201 provides a ligand contact to a ubiquinone. 4 consecutive transmembrane segments (helical) span residues 226-246 (IKDALGFMLLLLVLLLLALFS), 288-308 (LGGVLAVLASILILLIIPLLH), 320-340 (VSQTLFWILTANLITLTWIGG), and 347-367 (FIIIGQLAPMPYFLLILVMMP).

It belongs to the cytochrome b family. As to quaternary structure, the cytochrome bc1 complex contains 11 subunits: 3 respiratory subunits (MT-CYB, CYC1 and UQCRFS1), 2 core proteins (UQCRC1 and UQCRC2) and 6 low-molecular weight proteins (UQCRH/QCR6, UQCRB/QCR7, UQCRQ/QCR8, UQCR10/QCR9, UQCR11/QCR10 and a cleavage product of UQCRFS1). This cytochrome bc1 complex then forms a dimer. It depends on heme b as a cofactor.

Its subcellular location is the mitochondrion inner membrane. In terms of biological role, component of the ubiquinol-cytochrome c reductase complex (complex III or cytochrome b-c1 complex) that is part of the mitochondrial respiratory chain. The b-c1 complex mediates electron transfer from ubiquinol to cytochrome c. Contributes to the generation of a proton gradient across the mitochondrial membrane that is then used for ATP synthesis. The chain is Cytochrome b (MT-CYB) from Dasyurus hallucatus (Northern quoll).